We begin with the raw amino-acid sequence, 390 residues long: GTPase Obg (390 aa).

One can recognise an Obg domain in the interval 1–159 (MKFVDEASIL…RELLLELMLL (159 aa)). The interval 127 to 147 (NTRFKSSVNRTPRQKTNGTPG) is disordered. The segment covering 129-145 (RFKSSVNRTPRQKTNGT) has biased composition (polar residues). An OBG-type G domain is found at 160 to 333 (ADVGMLGMPN…LCWDVMTFII (174 aa)). Residues 166-173 (GMPNAGKS), 191-195 (FTTLV), 213-216 (DIPG), 283-286 (NKID), and 314-316 (SAA) each bind GTP. Mg(2+)-binding residues include Ser173 and Thr193.

Belongs to the TRAFAC class OBG-HflX-like GTPase superfamily. OBG GTPase family. As to quaternary structure, monomer. Mg(2+) is required as a cofactor.

It localises to the cytoplasm. An essential GTPase which binds GTP, GDP and possibly (p)ppGpp with moderate affinity, with high nucleotide exchange rates and a fairly low GTP hydrolysis rate. Plays a role in control of the cell cycle, stress response, ribosome biogenesis and in those bacteria that undergo differentiation, in morphogenesis control. This is GTPase Obg from Escherichia coli O157:H7.